Reading from the N-terminus, the 387-residue chain is 3-ketoacyl-CoA thiolase (387 aa).

Catalysis depends on Cys91, which acts as the Acyl-thioester intermediate. Active-site proton acceptor residues include His343 and Cys373.

The protein belongs to the thiolase-like superfamily. Thiolase family. In terms of assembly, heterotetramer of two alpha chains (FadB) and two beta chains (FadA).

It localises to the cytoplasm. It carries out the reaction an acyl-CoA + acetyl-CoA = a 3-oxoacyl-CoA + CoA. It functions in the pathway lipid metabolism; fatty acid beta-oxidation. Functionally, catalyzes the final step of fatty acid oxidation in which acetyl-CoA is released and the CoA ester of a fatty acid two carbons shorter is formed. The sequence is that of 3-ketoacyl-CoA thiolase from Shigella flexneri serotype 5b (strain 8401).